The chain runs to 45 residues: Unknown protein from spots 23/28/205 of 2D-PAGE of thylakoid (45 aa).

It localises to the plastid. The protein resides in the chloroplast thylakoid. The polypeptide is Unknown protein from spots 23/28/205 of 2D-PAGE of thylakoid (Pisum sativum (Garden pea)).